Consider the following 336-residue polypeptide: UDP-3-O-acylglucosamine N-acyltransferase (336 aa).

H233 serves as the catalytic Proton acceptor.

Belongs to the transferase hexapeptide repeat family. LpxD subfamily. In terms of assembly, homotrimer.

It carries out the reaction a UDP-3-O-[(3R)-3-hydroxyacyl]-alpha-D-glucosamine + a (3R)-hydroxyacyl-[ACP] = a UDP-2-N,3-O-bis[(3R)-3-hydroxyacyl]-alpha-D-glucosamine + holo-[ACP] + H(+). It functions in the pathway bacterial outer membrane biogenesis; LPS lipid A biosynthesis. In terms of biological role, catalyzes the N-acylation of UDP-3-O-acylglucosamine using 3-hydroxyacyl-ACP as the acyl donor. Is involved in the biosynthesis of lipid A, a phosphorylated glycolipid that anchors the lipopolysaccharide to the outer membrane of the cell. The chain is UDP-3-O-acylglucosamine N-acyltransferase from Helicobacter pylori (strain J99 / ATCC 700824) (Campylobacter pylori J99).